Consider the following 408-residue polypeptide: FAD-dependent monooxygenase nscC (408 aa).

An N-terminal signal peptide occupies residues 1–20; the sequence is MASRLPILIIGAGISGLTTA. Residues Glu-34 and Ala-45 each contribute to the FAD site. N-linked (GlcNAc...) asparagine glycans are attached at residues Asn-91 and Asn-103. Arg-119 contacts FAD. N-linked (GlcNAc...) asparagine glycosylation is found at Asn-170 and Asn-231. 2 residues coordinate FAD: Asp-328 and Gly-341.

Belongs to the paxM FAD-dependent monooxygenase family. Requires FAD as cofactor.

It functions in the pathway secondary metabolite biosynthesis. Functionally, FAD-dependent monooxygenase; part of the gene cluster that mediates the biosynthesis of neosartoricin, a prenylated anthracenone that exhibits T-cell antiproliferative activity, suggestive of a physiological role as an immunosuppressive agent. The non-reducing polyketide synthase nscA probably synthesizes and cyclizes the decaketide backbone. The hydrolase nscB then mediates the product release through hydrolysis followed by spontaneous decarboxylation. The prenyltransferase nscD catalyzes the addition of the dimethylallyl group to the aromatic C5. The FAD-dependent monooxygenase nscC is then responsible for the stereospecific hydroxylation at C2. There is no gene encoding O-acetyltransferase in the nsc gene cluster; thus, the last step of 2-O-acetylation leading to neosartoricin may be catalyzed by an unidentified O-acetyltransferase. The sequence is that of FAD-dependent monooxygenase nscC from Aspergillus fumigatus (strain ATCC MYA-4609 / CBS 101355 / FGSC A1100 / Af293) (Neosartorya fumigata).